The following is a 407-amino-acid chain: MTIESTNSFVVPSDTKLIDVTPLGSTKLFQPIKVGNNVLPQRIAYVPTTRFRASKDHIPSDLQLNYYNARSQYPGTLIITEATFASERGGIDLHVPGIYNDAQAKSWKKINEAIHGNGSFSSVQLWYLGRVANAKDLKDSGLPLIAPSAVYWDENSEKLAKEAGNELRALTEEEIDHIVEVEYPNAAKHALEAGFDYVEIHGAHGYLLDQFLNLASNKRTDKYGCGSIENRARLLLRVVDKLIEVVGANRLALRLSPWASFQGMEIEGEEIHSYILQQLQQRADNGQQLAYISLVEPRVTGIYDVSLKDQQGRSNEFAYKIWKGNFIRAGNYTYDAPEFKTLINDLKNDRSIIGFSRFFTSNPDLVEKLKLGKPLNYYNREEFYKYYNYGYNSYDESEKQVIGKPLA.

Residues Thr49 and Gln124 each contribute to the FMN site. 201 to 204 (HGAH) serves as a coordination point for substrate. Tyr206 functions as the Proton donor in the catalytic mechanism. The FMN site is built by Arg254 and Arg357.

Belongs to the NADH:flavin oxidoreductase/NADH oxidase family. The cofactor is FMN.

The enzyme catalyses A + NADPH + H(+) = AH2 + NADP(+). Its function is as follows. Oxidoreductase that binds mammalian estrogens with high affinity. This is Probable NADPH dehydrogenase from Candida albicans (Yeast).